A 174-amino-acid chain; its full sequence is Type II secretion system protein M (174 aa).

Residues 1 to 32 (MKVMTQFHERLRAQAETSQLAIRWRGLPARDR) are Cytoplasmic-facing. Residues 33-52 (LALLWLGAFLLLVVLYLALW) traverse the membrane as a helical segment. Residues 53–174 (RPAERHLQSA…VSARLSLRVE (122 aa)) lie on the Periplasmic side of the membrane.

The protein belongs to the GSP M family. Type II secretion system is composed of four main components: the outer membrane complex, the inner membrane complex, the cytoplasmic secretion ATPase and the periplasm-spanning pseudopilus. Forms homodimers. Interacts with XcpY/GspL. Interacts with XcpR/GspE and XcpS/GspF.

The protein resides in the cell inner membrane. Its function is as follows. Inner membrane component of the type II secretion system required for the energy-dependent secretion of extracellular factors such as proteases and toxins from the periplasm. Plays a role in the complex assembly and recruits XcpY resulting in a stable complex in the inner membrane. Provides thus a link between the energy-providing XcpR protein in the cytoplasm and the rest of the T2SS machinery. The protein is Type II secretion system protein M (xcpZ) of Pseudomonas aeruginosa (strain ATCC 15692 / DSM 22644 / CIP 104116 / JCM 14847 / LMG 12228 / 1C / PRS 101 / PAO1).